The following is a 246-amino-acid chain: Probable transcriptional regulatory protein PM0980 (246 aa).

It belongs to the TACO1 family.

The protein resides in the cytoplasm. The sequence is that of Probable transcriptional regulatory protein PM0980 from Pasteurella multocida (strain Pm70).